The following is a 633-amino-acid chain: Histone-lysine N-methyltransferase Su(var)3-9 (633 aa).

The Chromo domain occupies 213-271; the sequence is YIVEKIESVEVVQFQPVFFVKWLGYDVSANTWESYVNLSDCAEMEKFVERHLQLHQHYI. The Pre-SET domain maps to 407 to 472; sequence VGCMCRHQSG…SCTNRVVQNG (66 aa). 9 residues coordinate Zn(2+): Cys409, Cys411, Cys419, Cys425, Cys426, Cys454, Cys458, Cys460, and Cys464. The SET domain maps to 475–601; sequence HPLVLFKTSN…AGEELSFDYI (127 aa). S-adenosyl-L-methionine contacts are provided by residues 486-488, Tyr529, and 558-559; these read SGW and NH. Zn(2+) contacts are provided by Cys561, Cys621, Cys623, and Cys628. The 17-residue stretch at 617–633 folds into the Post-SET domain; the sequence is ARVQCRCGAANCRKVLF.

This sequence belongs to the class V-like SAM-binding methyltransferase superfamily. Histone-lysine methyltransferase family. Suvar3-9 subfamily. As to quaternary structure, interacts with Su(var)205 and Su(var)3-7. Probably associates with HDAC1/Rpd3.

It is found in the nucleus. The protein resides in the chromosome. The protein localises to the centromere. The enzyme catalyses L-lysyl(9)-[histone H3] + 3 S-adenosyl-L-methionine = N(6),N(6),N(6)-trimethyl-L-lysyl(9)-[histone H3] + 3 S-adenosyl-L-homocysteine + 3 H(+). Histone methyltransferase that specifically trimethylates 'Lys-9' of histone H3 using monomethylated H3 'Lys-9' as substrate. H3 'Lys-9' trimethylation represents a specific tag for epigenetic transcriptional repression by recruiting Su(var)205/HP1 to methylated histones. Mainly functions in heterochromatin regions, thereby playing a central role in the establishment of constitutive heterochromatin at pericentric regions. Involved in heterochromatic gene silencing including the modification of position-effect-variegation. The sequence is that of Histone-lysine N-methyltransferase Su(var)3-9 (Su(var)3-9) from Drosophila pseudoobscura pseudoobscura (Fruit fly).